The primary structure comprises 160 residues: Large ribosomal subunit protein bL9 (160 aa).

It belongs to the bacterial ribosomal protein bL9 family.

Binds to the 23S rRNA. In Neorickettsia sennetsu (strain ATCC VR-367 / Miyayama) (Ehrlichia sennetsu), this protein is Large ribosomal subunit protein bL9.